The following is a 1494-amino-acid chain: MNGGKECDGGDKEGGLPAIQVPVGWQRRVDQNGVLYVSPSGSLLSCLEQVKTYLLTDGTCKCGLECPLILPKVFNFDPGAAVKQRTAEDVKADEDVTKLCIHKRKIIAVATLHKSMEAPHPSLVLTSPGGGTNATPVVPSRAATPRSVRNKSHEGITNSVMPECKNPFKLMIGSSNAMGRLYVQELPGSQQQELHPVYPRQRLGSSEHGQKSPFRGSHGGLPSPASSGSQIYGDGSISPRTDPLGSPDVFTRSNPGFHGAPNSSPIHLNRTPLSPPSVMLHGSPVQSSCAMAGRTNIPLSPTLTTKSPVMKKPMCNFSTNMEIPRAMFHHKPPQGPPPPPPPSCALQKKPLTSEKDPLGILDPIPSKPVNQNPVIINPTSFHSNVHSQVPMMNVSMPPAVVPLPSNLPLPTVKPGHMNHGSHVQRVQHSASTSLSPSPVTSPVHMMGTGIGRIEASPQRSRSSSTSSDHGNFMMPPVGPQATSSGIKVPPRSPRSTIGSPRPSMPSSPSTKSDGHHQYKDIPNPLIAGISNVLNTPSSAAFPTASAGSSSVKSQPGLLGMPLNQILNQHNAASFPASSLLSAAAKAQLANQNKLAGNNSSSSSNSGAVAGSGNTEGHSTLNTMFPPTANMLLPTGEGQSGRAALRDKLMSQQKDALRKRKQPPTTVLSLLRQSQMDSSAVPKPGPDLLRKQGQGSFPISSMSQLLQSMSCQSSHLSSNSTPGCGASNTALPCSANQLHFTDPSMNSSVLQNIPLRGEAVHCHNANTNFVHSNSPVPNHHLAGLINQIQASGNCGMLSQSGMALGNSLHPNPPQSRISTSSTPVIPNSIVSSYNQTSSEAGGSGPSSSIAIAGTNHPAITKTTSVLQDGVIVTTAAGNPLQSQLPIGSDFPFVGQEHALHFPSNSTSNNHLPHPLNPSLLSSLPISLPVNQQHLLNQNLLNILQPSAGEGDMSSINNTLSNHQLTHLQSLLNNNQMFPPNQQQQQLLQGYQNLQAFQGQSTIPCPANNNPMACLFQNFQVRMQEDAALLNKRISTQPGLTALPENPNTTLPPFQDTPCELQPRIDPSLGQQVKDGLVVGGPGDASVDAIYKAVVDAASKGMQVVITTAVNSTTQISPIPALSAMSAFTASIGDPLNLSSAVSAVIHGRNMGGVDHDGRLRNSRGARLPKNLDHGKNVNEGDGFEYFKSASCHTSKKQWDGEQSPRGERNRWKYEEFLDHPGHIHSSPCHERPNNVSTLPFLPGEQHPILLPPRNCPGDKILEENFRYNNYKRTMMSFKERLENTVERCAHINGNRPRQSRGFGELLSTAKQDLVLEEQSPSSSNSLENSLVKDYIHYNGDFNAKSVNGCVPSPSDAKSISSEDDLRNPDSPSSNELIHYRPRTFNVGDLVWGQIKGLTSWPGKLVREDDVHNSCQQSPEEGKVEPEKLKTLTEGLEAYSRVRKRNRKSGKLNNHLEAAIHEAMSELDKMSGTVHQIPQGDRQMRPPKPKRRKISR.

The MBD domain maps to 11–81 (DKEGGLPAIQ…KVFNFDPGAA (71 aa)). The required for interaction with ASXL1/2/3 stretch occupies residues 57-68 (DGTCKCGLECPL). Disordered regions lie at residues 123–152 (LVLTSPGGGTNATPVVPSRAATPRSVRNKS), 200–274 (RQRL…TPLS), 329–350 (HHKPPQGPPPPPPPSCALQKKP), 450–522 (IGRI…KDIP), 594–641 (LAGN…QSGR), 809–848 (PNPPQSRISTSSTPVIPNSIVSSYNQTSSEAGGSGPSSSI), 1154–1173 (HDGRLRNSRGARLPKNLDHG), and 1345–1375 (VNGCVPSPSDAKSISSEDDLRNPDSPSSNEL). Residues 333 to 343 (PQGPPPPPPPS) show a composition bias toward pro residues. Composition is skewed to low complexity over residues 499–511 (SPRPSMPSSPSTK) and 594–612 (LAGNNSSSSSNSGAVAGSG). 2 stretches are compositionally biased toward polar residues: residues 614-624 (TEGHSTLNTMF) and 813-835 (QSRISTSSTPVIPNSIVSSYNQT). Over residues 836–848 (SSEAGGSGPSSSI) the composition is skewed to low complexity. The 25-residue stretch at 1385-1409 (VGDLVWGQIKGLTSWPGKLVREDDV) folds into the PWWP domain. Residues 1468 to 1494 (MSGTVHQIPQGDRQMRPPKPKRRKISR) are disordered. The span at 1483 to 1494 (RPPKPKRRKISR) shows a compositional bias: basic residues.

In terms of assembly, core component of the polycomb repressive deubiquitinase (PR-DUB) complex, at least composed of BAP1, one of ASXL1, ASXL2 or (probably) ASXL3, and one of MBD5 or MBD6. Distinct combinations of ASXL and MBD proteins may preferentially bind specific histone modification marks. The PR-DUB core associates with a number of accessory proteins, including FOXK1, FOXK2, KDM1B, HCFC1 and OGT; KDM1B specifically associates with ASXL2 PR-DUB complexes. Interacts (via MBD domain) with ASXL1, ASXL2 and ASXL3 (via PHD domain); the interaction is probably direct, mediates association with other PR-DUB complex core components. Detected in heart, placenta, liver, skeletal muscle, kidney and pancreas.

It localises to the nucleus. Its subcellular location is the chromosome. In terms of biological role, non-catalytic component of the polycomb repressive deubiquitinase (PR-DUB) complex, a complex that specifically mediates deubiquitination of histone H2A monoubiquitinated at 'Lys-120' (H2AK119ub1). Important for stability of PR-DUB components and stimulating its ubiquitinase activity. As part of the PR-DUB complex, associates with chromatin enriched in histone marks H3K4me1, H3K4me3, and H3K27Ac, but not in H3K27me3. The PR-DUB complex is an epigenetic regulator of gene expression, including genes involved in cell growth and survivability. MBD5 and MBD6 containing complexes associate with distinct chromatin regions enriched in genes involved in different pathways. Heterochromatin recruitment is not mediated by DNA methylation. The PR-DUB complex is an epigenetic regulator of gene expression, including genes involved in development, cell communication, signaling, cell proliferation and cell viability. The protein is Methyl-CpG-binding domain protein 5 (MBD5) of Homo sapiens (Human).